The primary structure comprises 191 residues: Prostaglandin-H2 D-isomerase (191 aa).

Residues 1-24 (MAALHTLWMGLVLLGVLGVLQTQA) form the signal peptide. A Pyrrolidone carboxylic acid modification is found at Gln25. N-linked (GlcNAc...) asparagine glycosylation occurs at Asn51. The active-site Nucleophile is the Cys65. N-linked (GlcNAc...) asparagine glycosylation occurs at Asn78. A disulfide bridge links Cys89 with Cys186.

The protein belongs to the calycin superfamily. Lipocalin family. Monomer.

The protein localises to the rough endoplasmic reticulum. It is found in the nucleus membrane. It localises to the golgi apparatus. Its subcellular location is the cytoplasm. The protein resides in the perinuclear region. The protein localises to the secreted. It carries out the reaction prostaglandin H2 = prostaglandin D2. Its function is as follows. Catalyzes the conversion of PGH2 to PGD2, a prostaglandin involved in smooth muscle contraction/relaxation and a potent inhibitor of platelet aggregation. Involved in a variety of CNS functions, such as sedation, NREM sleep and PGE2-induced allodynia, and may have an anti-apoptotic role in oligodendrocytes. Binds small non-substrate lipophilic molecules, including biliverdin, bilirubin, retinal, retinoic acid and thyroid hormone, and may act as a scavenger for harmful hydrophobic molecules and as a secretory retinoid and thyroid hormone transporter. Possibly involved in development and maintenance of the blood-brain, blood-retina, blood-aqueous humor and blood-testis barrier. It is likely to play important roles in both maturation and maintenance of the central nervous system and male reproductive system. Involved in PLA2G3-dependent maturation of mast cells. PLA2G3 is secreted by immature mast cells and acts on nearby fibroblasts upstream to PTDGS to synthesize PGD2, which in turn promotes mast cell maturation and degranulation via PTGDR. In Ursus arctos (Brown bear), this protein is Prostaglandin-H2 D-isomerase (PTGDS).